Consider the following 336-residue polypeptide: D-erythrose-4-phosphate dehydrogenase (336 aa).

NAD(+)-binding positions include 11 to 12 (RI) and Arg-80. Substrate is bound by residues 153-155 (SCT), Arg-199, 212-213 (TK), and Arg-235. The active-site Nucleophile is Cys-154. Asn-317 contributes to the NAD(+) binding site.

This sequence belongs to the glyceraldehyde-3-phosphate dehydrogenase family. Epd subfamily. As to quaternary structure, homotetramer.

The protein localises to the cytoplasm. It carries out the reaction D-erythrose 4-phosphate + NAD(+) + H2O = 4-phospho-D-erythronate + NADH + 2 H(+). The protein operates within cofactor biosynthesis; pyridoxine 5'-phosphate biosynthesis; pyridoxine 5'-phosphate from D-erythrose 4-phosphate: step 1/5. Functionally, catalyzes the NAD-dependent conversion of D-erythrose 4-phosphate to 4-phosphoerythronate. This is D-erythrose-4-phosphate dehydrogenase from Aeromonas hydrophila subsp. hydrophila (strain ATCC 7966 / DSM 30187 / BCRC 13018 / CCUG 14551 / JCM 1027 / KCTC 2358 / NCIMB 9240 / NCTC 8049).